The primary structure comprises 469 residues: Transcription factor phomD' (469 aa).

The segment at residues 14–41 (CNACNESKVRCSQRKPTCARCERNGVEC) is a DNA-binding region (zn(2)-C6 fungal-type). Positions 49 to 118 (THKDAPPISM…QQKDEAAAAA (70 aa)) are disordered. The span at 82 to 93 (KANSNSSSNWHM) shows a compositional bias: polar residues. Residues 104–118 (QQQQQQQKDEAAAAA) show a composition bias toward low complexity.

The protein localises to the nucleus. Its function is as follows. Transcription factor; part of the gene cluster that mediates the biosynthesis of the phomopsins, a group of hexapeptide mycotoxins which infects lupins and causes lupinosis disease in livestock. May play a role in the regulation of the production of phomopsins. This is Transcription factor phomD' from Diaporthe leptostromiformis (Lupinosis disease fungus).